Here is a 347-residue protein sequence, read N- to C-terminus: Phospho-N-acetylmuramoyl-pentapeptide-transferase (347 aa).

A run of 10 helical transmembrane segments spans residues 10-30, 67-87, 91-111, 127-147, 164-184, 195-215, 220-240, 250-270, 275-295, and 325-345; these read SLVFFLLTVFALAFILGIFLG, AGGILFFIVLLLTIFFWLPLG, TWLFAFLIISWSSLGWYDDIV, FVLQLLISAVITTAVMYIYKG, LGHSVLGQVFYFILAVLAIVG, LDGLAAGTTCMCAFGLLVVAV, IPLATDIPVLLTALLGVSLAF, VFMGDTGSLLIGGVLGSCAVM, LLLILLGGVFVAEAGSVILQI, and VVKRFWTAGFFCMVFGIIAAL.

It belongs to the glycosyltransferase 4 family. MraY subfamily. Requires Mg(2+) as cofactor.

It localises to the cell inner membrane. It catalyses the reaction UDP-N-acetyl-alpha-D-muramoyl-L-alanyl-gamma-D-glutamyl-meso-2,6-diaminopimeloyl-D-alanyl-D-alanine + di-trans,octa-cis-undecaprenyl phosphate = di-trans,octa-cis-undecaprenyl diphospho-N-acetyl-alpha-D-muramoyl-L-alanyl-D-glutamyl-meso-2,6-diaminopimeloyl-D-alanyl-D-alanine + UMP. It participates in cell wall biogenesis; peptidoglycan biosynthesis. Its function is as follows. Catalyzes the initial step of the lipid cycle reactions in the biosynthesis of the cell wall peptidoglycan: transfers peptidoglycan precursor phospho-MurNAc-pentapeptide from UDP-MurNAc-pentapeptide onto the lipid carrier undecaprenyl phosphate, yielding undecaprenyl-pyrophosphoryl-MurNAc-pentapeptide, known as lipid I. This is Phospho-N-acetylmuramoyl-pentapeptide-transferase from Chlamydia abortus (strain DSM 27085 / S26/3) (Chlamydophila abortus).